The primary structure comprises 235 residues: Uridylate kinase (235 aa).

10 to 13 (KLSG) is an ATP binding site. Position 52 (glycine 52) interacts with UMP. Glycine 53 and arginine 57 together coordinate ATP. UMP is bound by residues aspartate 72 and 133-140 (TSNPYFST). ATP-binding residues include threonine 160, tyrosine 166, and aspartate 169.

Belongs to the UMP kinase family. In terms of assembly, homohexamer.

The protein localises to the cytoplasm. The enzyme catalyses UMP + ATP = UDP + ADP. The protein operates within pyrimidine metabolism; CTP biosynthesis via de novo pathway; UDP from UMP (UMPK route): step 1/1. Its activity is regulated as follows. Inhibited by UTP. In terms of biological role, catalyzes the reversible phosphorylation of UMP to UDP. This Solibacter usitatus (strain Ellin6076) protein is Uridylate kinase.